The sequence spans 537 residues: Glucans biosynthesis protein D 2 (537 aa).

Residues Met1–Ala28 constitute a signal peptide (tat-type signal).

Belongs to the OpgD/OpgG family. In terms of processing, predicted to be exported by the Tat system. The position of the signal peptide cleavage has not been experimentally proven.

Its subcellular location is the periplasm. Its pathway is glycan metabolism; osmoregulated periplasmic glucan (OPG) biosynthesis. Probably involved in the control of the structural glucose backbone of osmoregulated periplasmic glucans (OPGs). The protein is Glucans biosynthesis protein D 2 (opgD2) of Ralstonia nicotianae (strain ATCC BAA-1114 / GMI1000) (Ralstonia solanacearum).